Here is a 140-residue protein sequence, read N- to C-terminus: ISDra2 transposase TnpA (140 aa).

Positions 67 and 69 each coordinate Mg(2+). The segment at 127–133 is mobile alpha helix; that stretch reads AQIQKYI. The Nucleophile role is filled by Tyr132. Gln136 provides a ligand contact to Mg(2+).

This sequence belongs to the transposase 17 family. Homodimer. It depends on Mg(2+) as a cofactor.

With respect to regulation, both the excision and insertion steps are inhibited by TnpB. A transposase that is part of insertion sequence (IS) element ISDra2, it is necessary and sufficient for both transposon excision and insertion of ISDra2. This protein alone can be provided in trans and allows transposition of an empty IS element (tnpA or tnpA-tnpB replaced by a selectable marker). ISDra2 binds subterminal imperfect palindromes at the left (LE) and right (RE) ends of the element and cleaves only the 'top strand' which is circularized and subsequently reinserted into the DNA target. This is called a 'peel and paste' mechanism and increases the copy number of the IS. Transposition is linked to DNA replication in the absence of irradiation, with maximal activity when the 'top strand' is on the replication lagging strand, and occurs preferentially on the lagging strand. The IS element inserts 3' of the target sequence 5'-TTGAT-3'; target duplication has not been observed. The protein is ISDra2 transposase TnpA of Deinococcus radiodurans (strain ATCC 13939 / DSM 20539 / JCM 16871 / CCUG 27074 / LMG 4051 / NBRC 15346 / NCIMB 9279 / VKM B-1422 / R1).